The sequence spans 247 residues: Probable transcriptional regulatory protein Spro_2779 (247 aa).

Belongs to the TACO1 family.

It localises to the cytoplasm. The protein is Probable transcriptional regulatory protein Spro_2779 of Serratia proteamaculans (strain 568).